Reading from the N-terminus, the 271-residue chain is 3-methyl-2-oxobutanoate hydroxymethyltransferase (271 aa).

2 residues coordinate Mg(2+): D51 and D90. 3-methyl-2-oxobutanoate-binding positions include 51 to 52 (DS), D90, and K118. E120 contacts Mg(2+). The Proton acceptor role is filled by E186.

It belongs to the PanB family. In terms of assembly, homodecamer; pentamer of dimers. The cofactor is Mg(2+).

It is found in the cytoplasm. The enzyme catalyses 3-methyl-2-oxobutanoate + (6R)-5,10-methylene-5,6,7,8-tetrahydrofolate + H2O = 2-dehydropantoate + (6S)-5,6,7,8-tetrahydrofolate. It functions in the pathway cofactor biosynthesis; (R)-pantothenate biosynthesis; (R)-pantoate from 3-methyl-2-oxobutanoate: step 1/2. Functionally, catalyzes the reversible reaction in which hydroxymethyl group from 5,10-methylenetetrahydrofolate is transferred onto alpha-ketoisovalerate to form ketopantoate. In Xanthomonas campestris pv. campestris (strain B100), this protein is 3-methyl-2-oxobutanoate hydroxymethyltransferase.